Reading from the N-terminus, the 467-residue chain is Amino-acid permease RocE (467 aa).

A run of 12 helical transmembrane segments spans residues 21-41 (FMISLGGVIGTGFFLGTGFTI), 47-67 (LGAVLSYLVGGFIMFLTMLCL), 87-107 (FISPAFGFAFGWLYWLGWAVT), 122-142 (WFPHIDVWIWCLVFAALMFIL), 162-182 (ILIILLFIILGGAAMFGLIDL), 207-227 (MLITMITVNFAFQGTELIGVA), 246-266 (VWRTLVFFVLSIIVIAGMIPW), 283-303 (IGIPYAADIMNFVILIALLSV), 336-356 (VPMYSLIVTMAVACLSLLTKF), 361-381 (TVYMVLLSLAGMSAQVGWITI), 409-429 (YPVLPLIGLTLNTVVLISLAF), and 435-455 (IALYCGVPFMIICYIIYHVVI).

It belongs to the amino acid-polyamine-organocation (APC) superfamily. Amino acid transporter (AAT) (TC 2.A.3.1) family.

It is found in the cell membrane. Putative transport protein involved in arginine degradative pathway. Probably transports arginine or ornithine. The polypeptide is Amino-acid permease RocE (Bacillus subtilis (strain 168)).